The sequence spans 350 residues: (RS)-norcoclaurine 6-O-methyltransferase (350 aa).

Position 166 (Met166) interacts with S-adenosyl-L-methionine. Residue Asp169 participates in substrate binding. Residues Thr170, Gly195, Asp218, 238–239 (DM), and Lys252 contribute to the S-adenosyl-L-methionine site. Substrate is bound by residues 253–257 (CILHD) and Asp306. The active-site Proton acceptor is the His256.

The protein belongs to the class I-like SAM-binding methyltransferase superfamily. Cation-independent O-methyltransferase family. COMT subfamily. Homodimer. In terms of tissue distribution, expressed in leaf primordia of rhizomes and root endodermis.

It carries out the reaction (S)-norcoclaurine + S-adenosyl-L-methionine = (S)-coclaurine + S-adenosyl-L-homocysteine + H(+). It catalyses the reaction norcoclaurine + S-adenosyl-L-methionine = coclaurine + S-adenosyl-L-homocysteine + H(+). Its activity is regulated as follows. Inhibited by sanguinarine. Involved in the biosynthesis of coclaurine, a precursor of benzylisoquinoline alkaloids. Catalyzes the transfer of the S-methyl group of S-adenosyl-L-methionine (AdoMet) to the 6-hydroxyl group of norcoclaurine to form coclaurine. In Thalictrum flavum subsp. glaucum (Yellow meadow rue), this protein is (RS)-norcoclaurine 6-O-methyltransferase.